A 102-amino-acid chain; its full sequence is A-type ATP synthase subunit F (102 aa).

The protein belongs to the V-ATPase F subunit family. In terms of assembly, has multiple subunits with at least A(3), B(3), C, D, E, F, H, I and proteolipid K(x).

It localises to the cell membrane. Its function is as follows. Component of the A-type ATP synthase that produces ATP from ADP in the presence of a proton gradient across the membrane. The protein is A-type ATP synthase subunit F of Thermococcus onnurineus (strain NA1).